Consider the following 555-residue polypeptide: 4-coumarate--CoA ligase-like 9 (555 aa).

Residues serine 200, serine 201, glycine 202, threonine 203, threonine 204, and lysine 208 each contribute to the ATP site. Tyrosine 248 lines the (E)-4-coumaroyl-AMP pocket. Arginine 269 serves as a coordination point for CoA. The SBD1 stretch occupies residues 271–342; it reads DLRTFLRALV…RKFPGVQVEE (72 aa). Position 320 (alanine 320) interacts with (E)-4-coumaroyl-AMP. The ATP site is built by glutamate 342, alanine 343, threonine 347, aspartate 431, and arginine 446. Positions 343 and 347 each coordinate (E)-4-coumaroyl-AMP. The tract at residues 343–410 is SBD2; it reads AYGLTEHSCI…VRSQSVMQGY (68 aa). (E)-4-coumaroyl-AMP is bound by residues lysine 448 and lysine 452. Residues lysine 454 and glycine 455 each coordinate CoA. Residue lysine 537 coordinates ATP.

This sequence belongs to the ATP-dependent AMP-binding enzyme family. In terms of assembly, interacts with STS1. The cofactor is Mg(2+).

It carries out the reaction (E)-4-coumarate + ATP + CoA = (E)-4-coumaroyl-CoA + AMP + diphosphate. The enzyme catalyses (E)-4-coumarate + ATP + H(+) = (E)-4-coumaroyl-AMP + diphosphate. The catalysed reaction is (E)-4-coumaroyl-AMP + CoA = (E)-4-coumaroyl-CoA + AMP + H(+). Carboxylate--CoA ligase that may use 4-coumarate as substrate. Follows a two-step reaction mechanism, wherein the carboxylate substrate first undergoes adenylation by ATP, followed by a thioesterification in the presence of CoA to yield the final CoA thioester. The chain is 4-coumarate--CoA ligase-like 9 (4CLL9) from Oryza sativa subsp. japonica (Rice).